The primary structure comprises 1106 residues: Probable LRR receptor-like serine/threonine-protein kinase At1g74360 (1106 aa).

The N-terminal stretch at 1 to 34 (MTMVTRVIMTDDDSQSLCFLCFLLFFFITAIAVA) is a signal peptide. The Extracellular portion of the chain corresponds to 35–736 (GDSLDSDREV…PRTLLLIWIS (702 aa)). LRR repeat units follow at residues 86-109 (RSRV…NFSA), 110-134 (LTEL…LSRC), 136-156 (NLKH…LPGL), 157-182 (SNLE…LFCN), 184-204 (LVVA…IFNG), 205-226 (CRNL…WTGF), and 227-250 (GRLV…MFRG). N-linked (GlcNAc...) asparagine glycosylation is found at Asn-93 and Asn-106. Asn-141 carries an N-linked (GlcNAc...) asparagine glycan. N-linked (GlcNAc...) asparagine glycosylation is found at Asn-188 and Asn-193. N-linked (GlcNAc...) asparagine glycans are attached at residues Asn-242 and Asn-251. LRR repeat units follow at residues 252–275 (CTLQ…VSNC), 276–299 (QNLN…IGSI), 300–323 (SSLK…LLNL), 325–346 (NLVF…IFGR), 348–371 (TQVK…NILK), 372–396 (LPNL…ISQI), 398–419 (SLKF…EYGN), 420–443 (MPGL…SFGK), 445–468 (TSLL…IGNC), 470–492 (SLLW…LTRM), 566–593 (VRTL…ISQM), 594–617 (DRLS…IGQL), 619–640 (LAFL…IGNL), 641–664 (KCLQ…LNDL), and 666–690 (ELSK…QVAT). N-linked (GlcNAc...) asparagine glycosylation is found at Asn-309 and Asn-322. Residues Asn-365, Asn-374, Asn-384, and Asn-408 are each glycosylated (N-linked (GlcNAc...) asparagine). N-linked (GlcNAc...) asparagine glycosylation is found at Asn-454 and Asn-467. Residues Asn-623, Asn-628, Asn-652, Asn-671, Asn-709, and Asn-713 are each glycosylated (N-linked (GlcNAc...) asparagine). A helical transmembrane segment spans residues 737 to 757 (LALALAFIACLVVSGIVLMVV). Residues 758–1106 (KASREAEIDL…GLSSQGYIEM (349 aa)) lie on the Cytoplasmic side of the membrane. 2 positions are modified to phosphothreonine: Thr-803 and Thr-811. Residues 814–1095 (FSEERVVGRG…VKISGKAELF (282 aa)) enclose the Protein kinase domain. Residues 820-828 (VGRGGYGTV) and Lys-842 each bind ATP. The active-site Proton acceptor is Asp-941. At Tyr-983 the chain carries Phosphotyrosine. Residue Thr-991 is modified to Phosphothreonine.

The protein belongs to the protein kinase superfamily. Ser/Thr protein kinase family.

Its subcellular location is the mitochondrion membrane. The enzyme catalyses L-seryl-[protein] + ATP = O-phospho-L-seryl-[protein] + ADP + H(+). It carries out the reaction L-threonyl-[protein] + ATP = O-phospho-L-threonyl-[protein] + ADP + H(+). The polypeptide is Probable LRR receptor-like serine/threonine-protein kinase At1g74360 (Arabidopsis thaliana (Mouse-ear cress)).